A 76-amino-acid polypeptide reads, in one-letter code: Tautomerase PptA (76 aa).

Residue proline 2 is the Proton acceptor; via imino nitrogen of the active site.

Belongs to the 4-oxalocrotonate tautomerase family. PptA subfamily. As to quaternary structure, homodimer.

The protein resides in the cytoplasm. The polypeptide is Tautomerase PptA (Enterobacter sp. (strain 638)).